The primary structure comprises 558 residues: uncharacterized protein (558 aa).

12 helical membrane-spanning segments follow: residues 21–41, 69–89, 100–120, 160–180, 220–240, 251–271, 303–323, 386–406, 413–433, 454–474, 479–499, and 519–539; these read IFCF…LPIA, FLDA…STVV, IVLA…AFLA, IIFL…LFYF, AFQA…IDLI, GLGI…GIGY, VITN…VEFI, VFPV…AMFI, TAGG…VAKF, AFLV…LLPL, PVSF…VGLS, and ALCL…LTFV.

This sequence belongs to the TrkH potassium transport family.

It localises to the cell membrane. This is an uncharacterized protein from Mycoplasma genitalium (strain ATCC 33530 / DSM 19775 / NCTC 10195 / G37) (Mycoplasmoides genitalium).